The following is a 1010-amino-acid chain: Pre-mRNA-splicing factor cwc22 (1010 aa).

The segment covering 1-10 (MASADMSPSR) has biased composition (polar residues). The segment at 1-166 (MASADMSPSR…RTPTPPPVAV (166 aa)) is disordered. Over residues 18–28 (RSPSPRTQSPS) the composition is skewed to low complexity. Composition is skewed to basic and acidic residues over residues 29 to 39 (PRDEDGSRSPG) and 65 to 78 (PRRD…DQPH). Over residues 84–109 (RSPTPRSQSPSRRSVRSPSPRQGSPA) the composition is skewed to low complexity. The span at 142–158 (RHRDAGGDYRPVRKERT) shows a compositional bias: basic and acidic residues. Residues 222-405 (KKSVNGLVNK…EVLFQVRKDK (184 aa)) form the MIF4G domain. The segment at 466-498 (GEASDDDEDDDDDDESESGSESEDEEQKALEIK) is disordered. The segment covering 468 to 491 (ASDDDEDDDDDDESESGSESEDEE) has biased composition (acidic residues). One can recognise an MI domain in the interval 507–623 (NLRRTIYLSI…GWHVFSVIHL (117 aa)). Residues 708–1010 (LPAPPADSDS…SPVAKRGRVD (303 aa)) form a disordered region. Residues 718-732 (ESVSSYSSYSSYSSR) show a composition bias toward low complexity. The span at 753 to 775 (PPRRGRGRSYSRTPSRSRSRSRS) shows a compositional bias: basic residues. A compositionally biased stretch (low complexity) spans 776 to 787 (YSRSVSKSVSRS). Basic residues-rich tracts occupy residues 834 to 846 (RRGR…RSRS) and 899 to 910 (RLRRGSYSRSRS). A compositionally biased stretch (low complexity) spans 911–935 (RSPIPIRGNGPAGRDTGRAGPAPAR). Positions 936–948 (GGRRNRSYSRSRT) are enriched in basic residues. A compositionally biased stretch (low complexity) spans 961–973 (SRRVVSRSPSPVV). Residues 976 to 1010 (NKRRRSYSSSRSRSRSSSRSRYRSRSPVAKRGRVD) show a composition bias toward basic residues.

It belongs to the CWC22 family. Associated with the spliceosome.

Its subcellular location is the cytoplasm. It is found in the nucleus. Functionally, involved in pre-mRNA splicing. The protein is Pre-mRNA-splicing factor cwc22 (msp-1) of Neurospora crassa (strain ATCC 24698 / 74-OR23-1A / CBS 708.71 / DSM 1257 / FGSC 987).